We begin with the raw amino-acid sequence, 256 residues long: Ribosomal RNA small subunit methyltransferase J (256 aa).

S-adenosyl-L-methionine is bound by residues 104-105, 120-121, 156-157, and Asp174; these read RD, ER, and SS.

Belongs to the methyltransferase superfamily. RsmJ family.

The protein resides in the cytoplasm. It catalyses the reaction guanosine(1516) in 16S rRNA + S-adenosyl-L-methionine = N(2)-methylguanosine(1516) in 16S rRNA + S-adenosyl-L-homocysteine + H(+). Specifically methylates the guanosine in position 1516 of 16S rRNA. This chain is Ribosomal RNA small subunit methyltransferase J, found in Yersinia pseudotuberculosis serotype O:1b (strain IP 31758).